A 601-amino-acid polypeptide reads, in one-letter code: uncharacterized protein (601 aa).

3 helical membrane-spanning segments follow: residues 74–94 (IFFF…VFSI), 104–124 (VSFL…PNDG), and 531–551 (LVLL…NYYY).

It localises to the endoplasmic reticulum membrane. This is an uncharacterized protein from Schizosaccharomyces pombe (strain 972 / ATCC 24843) (Fission yeast).